Here is a 269-residue protein sequence, read N- to C-terminus: Thymidylate synthase (269 aa).

A dUMP-binding site is contributed by Arg26. His56 lines the (6R)-5,10-methylene-5,6,7,8-tetrahydrofolate pocket. 131–132 serves as a coordination point for dUMP; sequence RR. Catalysis depends on Cys151, which acts as the Nucleophile. DUMP-binding positions include 171-174, Asn182, and 212-214; these read RSAD and HIY. A (6R)-5,10-methylene-5,6,7,8-tetrahydrofolate-binding site is contributed by Asp174. Residue Ala268 coordinates (6R)-5,10-methylene-5,6,7,8-tetrahydrofolate.

The protein belongs to the thymidylate synthase family. Bacterial-type ThyA subfamily. Homodimer.

It is found in the cytoplasm. The enzyme catalyses dUMP + (6R)-5,10-methylene-5,6,7,8-tetrahydrofolate = 7,8-dihydrofolate + dTMP. It participates in pyrimidine metabolism; dTTP biosynthesis. Functionally, catalyzes the reductive methylation of 2'-deoxyuridine-5'-monophosphate (dUMP) to 2'-deoxythymidine-5'-monophosphate (dTMP) while utilizing 5,10-methylenetetrahydrofolate (mTHF) as the methyl donor and reductant in the reaction, yielding dihydrofolate (DHF) as a by-product. This enzymatic reaction provides an intracellular de novo source of dTMP, an essential precursor for DNA biosynthesis. The polypeptide is Thymidylate synthase (Leifsonia xyli subsp. xyli (strain CTCB07)).